Consider the following 147-residue polypeptide: Large ribosomal subunit protein bL9 (147 aa).

This sequence belongs to the bacterial ribosomal protein bL9 family.

In terms of biological role, binds to the 23S rRNA. The sequence is that of Large ribosomal subunit protein bL9 from Bacteroides fragilis (strain YCH46).